We begin with the raw amino-acid sequence, 410 residues long: Neuroserpin (410 aa).

An N-terminal signal peptide occupies residues 1-16 (MYFLGLLSLLVLPSKA). N-linked (GlcNAc...) asparagine glycans are attached at residues Asn157 and Asn401.

Belongs to the serpin family. Detected in embryonic ocular vitreous fluid (at protein level). In the embryo present in retina, brain, cerebellum and spinal cord. In adult, predominantly expressed in the brain.

The protein localises to the secreted. Its subcellular location is the cytoplasmic vesicle. The protein resides in the secretory vesicle lumen. It is found in the perikaryon. Serine protease inhibitor that inhibits plasminogen activators and plasmin but not thrombin. May be involved in the formation or reorganization of synaptic connections as well as for synaptic plasticity in the adult nervous system. May protect neurons from cell damage by tissue-type plasminogen activator. The sequence is that of Neuroserpin (SERPINI1) from Gallus gallus (Chicken).